Here is a 263-residue protein sequence, read N- to C-terminus: Glutamate racemase (263 aa).

Residues 13–14 (DS) and 45–46 (YG) each bind substrate. Cys77 acts as the Proton donor/acceptor in catalysis. Position 78–79 (78–79 (NT)) interacts with substrate. The active-site Proton donor/acceptor is the Cys185. A substrate-binding site is contributed by 186–187 (TH).

This sequence belongs to the aspartate/glutamate racemases family.

It carries out the reaction L-glutamate = D-glutamate. It participates in cell wall biogenesis; peptidoglycan biosynthesis. In terms of biological role, provides the (R)-glutamate required for cell wall biosynthesis. This chain is Glutamate racemase, found in Vibrio vulnificus (strain CMCP6).